Consider the following 95-residue polypeptide: Co-chaperonin GroES (95 aa).

This sequence belongs to the GroES chaperonin family. Heptamer of 7 subunits arranged in a ring. Interacts with the chaperonin GroEL.

It localises to the cytoplasm. In terms of biological role, together with the chaperonin GroEL, plays an essential role in assisting protein folding. The GroEL-GroES system forms a nano-cage that allows encapsulation of the non-native substrate proteins and provides a physical environment optimized to promote and accelerate protein folding. GroES binds to the apical surface of the GroEL ring, thereby capping the opening of the GroEL channel. The polypeptide is Co-chaperonin GroES (Cereibacter sphaeroides (strain ATCC 17025 / ATH 2.4.3) (Rhodobacter sphaeroides)).